The sequence spans 144 residues: Large ribosomal subunit protein uL16 (144 aa).

The protein belongs to the universal ribosomal protein uL16 family. As to quaternary structure, part of the 50S ribosomal subunit.

Binds 23S rRNA and is also seen to make contacts with the A and possibly P site tRNAs. The protein is Large ribosomal subunit protein uL16 of Levilactobacillus brevis (strain ATCC 367 / BCRC 12310 / CIP 105137 / JCM 1170 / LMG 11437 / NCIMB 947 / NCTC 947) (Lactobacillus brevis).